A 422-amino-acid polypeptide reads, in one-letter code: Adenylosuccinate synthetase (422 aa).

GTP-binding positions include 11–17 and 39–41; these read GDEGKGK and GHT. Residue aspartate 12 is the Proton acceptor of the active site. The Mg(2+) site is built by aspartate 12 and glycine 39. Residues 12-15, 37-40, threonine 129, arginine 143, asparagine 219, threonine 234, and arginine 298 each bind IMP; these read DEGK and NAGH. Histidine 40 serves as the catalytic Proton donor. 294–300 provides a ligand contact to substrate; that stretch reads VTTGRKR. GTP-binding positions include arginine 300, 326–328, and 411–413; these read KLD and GTG.

Belongs to the adenylosuccinate synthetase family. In terms of assembly, homodimer. It depends on Mg(2+) as a cofactor.

It localises to the cytoplasm. It carries out the reaction IMP + L-aspartate + GTP = N(6)-(1,2-dicarboxyethyl)-AMP + GDP + phosphate + 2 H(+). It functions in the pathway purine metabolism; AMP biosynthesis via de novo pathway; AMP from IMP: step 1/2. Plays an important role in the de novo pathway and in the salvage pathway of purine nucleotide biosynthesis. Catalyzes the first committed step in the biosynthesis of AMP from IMP. In Talaromyces stipitatus (strain ATCC 10500 / CBS 375.48 / QM 6759 / NRRL 1006) (Penicillium stipitatum), this protein is Adenylosuccinate synthetase.